A 670-amino-acid polypeptide reads, in one-letter code: DNA ligase (670 aa).

Residues 32–36 (DAEYD), 81–82 (SL), and glutamate 111 each bind NAD(+). Residue lysine 113 is the N6-AMP-lysine intermediate of the active site. Residues arginine 134, glutamate 171, lysine 290, and lysine 314 each coordinate NAD(+). Cysteine 408, cysteine 411, cysteine 426, and cysteine 432 together coordinate Zn(2+). The BRCT domain occupies 591-670 (EEALSLKGQT…DGLLAVLAGE (80 aa)).

This sequence belongs to the NAD-dependent DNA ligase family. LigA subfamily. Mg(2+) serves as cofactor. The cofactor is Mn(2+).

It catalyses the reaction NAD(+) + (deoxyribonucleotide)n-3'-hydroxyl + 5'-phospho-(deoxyribonucleotide)m = (deoxyribonucleotide)n+m + AMP + beta-nicotinamide D-nucleotide.. In terms of biological role, DNA ligase that catalyzes the formation of phosphodiester linkages between 5'-phosphoryl and 3'-hydroxyl groups in double-stranded DNA using NAD as a coenzyme and as the energy source for the reaction. It is essential for DNA replication and repair of damaged DNA. This Shewanella sediminis (strain HAW-EB3) protein is DNA ligase.